We begin with the raw amino-acid sequence, 609 residues long: MMSENRNTIIAIVLSGLILIAWQYFYNIPQMEKDRAAQQAQSQTAKSPTEPTPNSPKPDHPAAESVVARGVAIATTPRVKIDTPRLSGSISLKGARIDDLLLTKFRETVDPASPAIELFSPSGTTTPYYAEFGWVAATGSTARVPDQNTVWQQEGSGALTQSTPVTLKYDNGEGLTFRRTIAVDDHYLFTIKDEVTNAGGAPVTLYPFALISRHGTPAVSGYYILHEGLIGYLGDQKLQEYSYKKIDEAKSVSFKVTNGWLGITDKYWAAALLPDTSAQLQARFSSNESGSVKTYQADYLEDAQTIPVGGTGSVNTRLFAGAKEAGVVGINFPFVELGGYNKQLGLNHFDLLIDWGWFYFITKPMFLALDFFFHVFGNFGIAILFVTVLIKAIFFPLANRSYASMAKMKAVQPQIAALKERFPDDKMKLQQEMMEIYKKEKINPISGCLPMVLQIPVFFSLYKVLFVTIEMRHAPFFAWIKDLSAPDPTHIFNLFGLLPYDPSAVPLLGPYLAIGAWPIIMGITMWFQMKLNPTPPDPTQKLIFDWMPVIFTFMLAAFPAGLVIYWAWNNTLSVIQQSYIMRRNGVKVELLNNVKSVFRRKSSDKPAKT.

Residues 9–29 traverse the membrane as a helical segment; it reads IIAIVLSGLILIAWQYFYNIP. The tract at residues 35 to 63 is disordered; the sequence is RAAQQAQSQTAKSPTEPTPNSPKPDHPAA. A run of 4 helical transmembrane segments spans residues 375–395, 449–469, 507–527, and 546–566; these read VFGNFGIAILFVTVLIKAIFF, LPMVLQIPVFFSLYKVLFVTI, LLGPYLAIGAWPIIMGITMWF, and WMPVIFTFMLAAFPAGLVIYW.

It belongs to the OXA1/ALB3/YidC family. Type 1 subfamily. In terms of assembly, interacts with the Sec translocase complex via SecD. Specifically interacts with transmembrane segments of nascent integral membrane proteins during membrane integration.

The protein resides in the cell inner membrane. Its function is as follows. Required for the insertion and/or proper folding and/or complex formation of integral membrane proteins into the membrane. Involved in integration of membrane proteins that insert both dependently and independently of the Sec translocase complex, as well as at least some lipoproteins. Aids folding of multispanning membrane proteins. The sequence is that of Membrane protein insertase YidC from Nitrobacter hamburgensis (strain DSM 10229 / NCIMB 13809 / X14).